The following is a 295-amino-acid chain: G1/S-specific cyclin-D1 (295 aa).

A Cyclin N-terminal domain is found at 28–152; sequence LRAMLKTEET…LLVNKLKWNL (125 aa). Residue Lys269 forms a Glycyl lysine isopeptide (Lys-Gly) (interchain with G-Cter in ubiquitin) linkage. The interval 269–295 is disordered; that stretch reads KATEEEGEVEEEAGLACTPTDVRDVDI. At Thr286 the chain carries Phosphothreonine.

This sequence belongs to the cyclin family. Cyclin D subfamily. In terms of assembly, interacts with either CDK4 or CDK6 protein kinase to form a serine/threonine kinase holoenzyme complex. The cyclin subunit imparts substrate specificity to the complex. Component of the ternary complex CCND1/CDK4/CDKN1B required for nuclear translocation and modulation of CDK4-mediated kinase activity. Interacts directly with CDKN1B. Can form similar complexes with either CDKN1A or CDKN2A. Interacts with UHRF2; the interaction ubiquitinates CCND1 and appears to occur independently of phosphorylation. Interacts with USP2. Interacts (via cyclin N-terminal domain) with INSM1 (via N-terminal region); the interaction competes with the binding of CCND1 to CDK4 during cell cycle progression and inhibits CDK4 activity. Interacts with CDK4; the interaction is prevented with the binding of CCND1 to INSM1 during cell cycle progression. Phosphorylation at Thr-286 by MAP kinases is required for ubiquitination and degradation by the DCX(AMBRA1) complex. It also plays an essential role for recognition by the FBXO31 component of SCF (SKP1-cullin-F-box) protein ligase complex following DNA damage. In terms of processing, ubiquitinated at Lys-269 by the DCX(AMBRA1) complex during the transition from G1 to S cell phase, leading to its degradation: ubiquitination is dependent on Thr-286 phosphorylation. The DCX(AMBRA1) complex represents the major regulator of CCND1 stability during the G1/S transition. Also ubiquitinated by the SCF(FBXO4) and Cul7-RING(FBXW8) ubiquitin-protein ligase complexes. Following DNA damage it is ubiquitinated by the SCF(FBXO31) protein ligase complex. SCF(FBXO31) ubiquitination is dependent on Thr-286 phosphorylation. Ubiquitinated also by UHRF2 apparently in a phosphorylation-independent manner. Ubiquitination leads to its degradation and G1 arrest. Deubiquitinated by USP2; leading to its stabilization.

Its subcellular location is the nucleus. It localises to the cytoplasm. The protein resides in the nucleus membrane. Its function is as follows. Regulatory component of the cyclin D1-CDK4 (DC) complex that phosphorylates and inhibits members of the retinoblastoma (RB) protein family including RB1 and regulates the cell-cycle during G(1)/S transition. Phosphorylation of RB1 allows dissociation of the transcription factor E2F from the RB/E2F complex and the subsequent transcription of E2F target genes which are responsible for the progression through the G(1) phase. Hypophosphorylates RB1 in early G(1) phase. Cyclin D-CDK4 complexes are major integrators of various mitogenenic and antimitogenic signals. Also a substrate for SMAD3, phosphorylating SMAD3 in a cell-cycle-dependent manner and repressing its transcriptional activity. Component of the ternary complex, cyclin D1/CDK4/CDKN1B, required for nuclear translocation and activity of the cyclin D-CDK4 complex. Exhibits transcriptional corepressor activity with INSM1 on the NEUROD1 and INS promoters in a cell cycle-independent manner. In Rattus norvegicus (Rat), this protein is G1/S-specific cyclin-D1 (Ccnd1).